Here is a 145-residue protein sequence, read N- to C-terminus: 3-hydroxyacyl-[acyl-carrier-protein] dehydratase FabZ (145 aa).

His48 is an active-site residue.

It belongs to the thioester dehydratase family. FabZ subfamily.

The protein localises to the cytoplasm. The enzyme catalyses a (3R)-hydroxyacyl-[ACP] = a (2E)-enoyl-[ACP] + H2O. In terms of biological role, involved in unsaturated fatty acids biosynthesis. Catalyzes the dehydration of short chain beta-hydroxyacyl-ACPs and long chain saturated and unsaturated beta-hydroxyacyl-ACPs. The chain is 3-hydroxyacyl-[acyl-carrier-protein] dehydratase FabZ from Marinomonas sp. (strain MWYL1).